Consider the following 503-residue polypeptide: Aspartyl/glutamyl-tRNA(Asn/Gln) amidotransferase subunit B (503 aa).

This sequence belongs to the GatB/GatE family. GatB subfamily. In terms of assembly, heterotrimer of A, B and C subunits.

It carries out the reaction L-glutamyl-tRNA(Gln) + L-glutamine + ATP + H2O = L-glutaminyl-tRNA(Gln) + L-glutamate + ADP + phosphate + H(+). The enzyme catalyses L-aspartyl-tRNA(Asn) + L-glutamine + ATP + H2O = L-asparaginyl-tRNA(Asn) + L-glutamate + ADP + phosphate + 2 H(+). In terms of biological role, allows the formation of correctly charged Asn-tRNA(Asn) or Gln-tRNA(Gln) through the transamidation of misacylated Asp-tRNA(Asn) or Glu-tRNA(Gln) in organisms which lack either or both of asparaginyl-tRNA or glutaminyl-tRNA synthetases. The reaction takes place in the presence of glutamine and ATP through an activated phospho-Asp-tRNA(Asn) or phospho-Glu-tRNA(Gln). This chain is Aspartyl/glutamyl-tRNA(Asn/Gln) amidotransferase subunit B, found in Cereibacter sphaeroides (strain ATCC 17025 / ATH 2.4.3) (Rhodobacter sphaeroides).